We begin with the raw amino-acid sequence, 435 residues long: Tol-Pal system protein TolB (435 aa).

Positions 1–24 (MIPMPKMIRSLLLLFCLLPLGAQA) are cleaved as a signal peptide.

Belongs to the TolB family. In terms of assembly, the Tol-Pal system is composed of five core proteins: the inner membrane proteins TolA, TolQ and TolR, the periplasmic protein TolB and the outer membrane protein Pal. They form a network linking the inner and outer membranes and the peptidoglycan layer.

It is found in the periplasm. In terms of biological role, part of the Tol-Pal system, which plays a role in outer membrane invagination during cell division and is important for maintaining outer membrane integrity. In Thioalkalivibrio sulfidiphilus (strain HL-EbGR7), this protein is Tol-Pal system protein TolB.